The sequence spans 414 residues: Glucose-1-phosphate adenylyltransferase (414 aa).

Alpha-D-glucose 1-phosphate is bound by residues Tyr-99, Gly-164, 181-182, and Ser-199; that span reads EK.

This sequence belongs to the bacterial/plant glucose-1-phosphate adenylyltransferase family. In terms of assembly, homotetramer.

It catalyses the reaction alpha-D-glucose 1-phosphate + ATP + H(+) = ADP-alpha-D-glucose + diphosphate. It participates in glycan biosynthesis; glycogen biosynthesis. Involved in the biosynthesis of ADP-glucose, a building block required for the elongation reactions to produce glycogen. Catalyzes the reaction between ATP and alpha-D-glucose 1-phosphate (G1P) to produce pyrophosphate and ADP-Glc. The chain is Glucose-1-phosphate adenylyltransferase from Bifidobacterium adolescentis (strain ATCC 15703 / DSM 20083 / NCTC 11814 / E194a).